The chain runs to 1108 residues: Retinal guanylyl cyclase 2 (1108 aa).

The first 50 residues, 1-50 (MFLGPWPFSRLLSWFAISSRLSGQHGLPSSKFLRCLCLLALLPLLRWGQA), serve as a signal peptide directing secretion. The Extracellular segment spans residues 51–469 (LPYKIGVIGP…CQGGIDPALA (419 aa)). A disulfide bridge links C104 with C132. A helical transmembrane segment spans residues 470–490 (MMVCFALLIALLSINGFAYFI). Residues 491–1108 (RRRINKIQLI…AERQLVRNKP (618 aa)) are Cytoplasmic-facing. In terms of domain architecture, Protein kinase spans 532–812 (FQIISEVQSG…DEIFNQFKTF (281 aa)). The region spanning 884 to 1014 (TLYFSDIVGF…DTVNTASRME (131 aa)) is the Guanylate cyclase domain.

The protein belongs to the adenylyl cyclase class-4/guanylyl cyclase family. Homodimer. Interacts with RD3; promotes the exit of GUCY2F from the endoplasmic reticulum and its trafficking to the photoreceptor outer segments. In terms of processing, there are 9 conserved cysteine residues in sensory guanylate cyclases, 6 in the extracellular domain, which may be involved in intra- or interchain disulfide bonds. As to expression, retina.

Its subcellular location is the membrane. It is found in the photoreceptor outer segment membrane. The enzyme catalyses GTP = 3',5'-cyclic GMP + diphosphate. Its activity is regulated as follows. Activated by GUCA1B when free calcium ions concentration is low, and inhibited by GUCA1B when free calcium ions concentration is high. Inhibited by RD3. Responsible for the synthesis of cyclic GMP (cGMP) in rods and cones of photoreceptors. Plays an essential role in phototransduction, by mediating cGMP replenishment. May also participate in the trafficking of membrane-asociated proteins to the photoreceptor outer segment membrane. This Mus musculus (Mouse) protein is Retinal guanylyl cyclase 2.